The primary structure comprises 664 residues: SPARC-like protein 1 (664 aa).

Positions 1–16 (MKTGLFFLCLLGTAAA) are cleaved as a signal peptide. The interval 25-34 (SDHSKPTAET) is O-glycosylated at one additional site. A disordered region spans residues 28 to 360 (SKPTAETVAP…DGPRHSASDD (333 aa)). O-linked (GalNAc...) threonine glycans are attached at residues Thr-31 and Thr-40. Ser-44 is a glycosylation site (O-linked (GalNAc...) serine). Basic and acidic residues predominate over residues 62–84 (DDSHHKAEKSSVLKSKEESHEQS). Phosphoserine is present on residues Ser-76, Ser-84, and Ser-92. A compositionally biased stretch (polar residues) spans 85-94 (AEQGKSSSQE). Residues 96 to 105 (GLKDQEDSDG) are compositionally biased toward basic and acidic residues. Residue Thr-116 is glycosylated (O-linked (GalNAc...) threonine). The span at 120 to 136 (LDIKEDMSEPQEKKLSE) shows a compositional bias: basic and acidic residues. Positions 146-156 (SSFTDSNQQES) are enriched in polar residues. Asn-169 is a glycosylation site (N-linked (GlcNAc...) asparagine). Residues 170–180 (YSHHQLNRSSK) show a composition bias toward basic residues. Ser-171 carries the phosphoserine modification. 2 N-linked (GlcNAc...) asparagine glycosylation sites follow: Asn-176 and Asn-196. A compositionally biased stretch (polar residues) spans 188-199 (QGNQEQDPNISN). Positions 216-235 (DNQERKTELPREHANSKQEE) are enriched in basic and acidic residues. Composition is skewed to acidic residues over residues 236-248 (DNTQ…EESD) and 259-280 (DEFD…EEEN). Ser-272 bears the Phosphoserine mark. An N-linked (GlcNAc...) asparagine glycan is attached at Asn-280. Residues 306–316 (SNHKETEEKTV) show a composition bias toward basic and acidic residues. Thr-331 is a glycosylation site (O-linked (GalNAc...) threonine). Acidic residues predominate over residues 339-349 (DDGDDDGDDGG). Residues Ser-358 and Ser-365 each carry the phosphoserine modification. Residues 388–426 (EKVHENENIGTTEPGEHQEAKKAENSSNEEETSSEGNMR) form a disordered region. Thr-398 carries an O-linked (GalNAc...) threonine glycan. The span at 401 to 411 (PGEHQEAKKAE) shows a compositional bias: basic and acidic residues. Asn-412 carries N-linked (GlcNAc...) asparagine glycosylation. A Phosphoserine modification is found at Ser-420. The region spanning 432–454 (SCMSFQCKRGHICKADQQGKPHC) is the Follistatin-like domain. Disulfide bonds link Cys-433-Cys-444, Cys-438-Cys-454, Cys-456-Cys-490, Cys-462-Cys-483, Cys-472-Cys-509, Cys-515-Cys-626, and Cys-634-Cys-650. Residues 450 to 511 (GKPHCVCQDP…QLDYFGACKS (62 aa)) form the Kazal-like domain. An N-linked (GlcNAc...) asparagine glycan is attached at Asn-476. Residues 622–657 (PMEHCITRFFEECDPNKDKHITLKEWGHCFGIKEED) form the EF-hand domain. The Ca(2+) site is built by Asp-635, Asn-637, Asp-639, His-641, and Glu-646.

This sequence belongs to the SPARC family. N- and O-glycosylated. O-glycosylated with a core 1 or possibly core 8 glycan. Highly expressed in lymph node, brain, heart, lung, skeletal muscle, ovary, small intestine, and colon, with lower levels in placenta, pancreas, testis, spleen, and thymus, and no expression in kidney, liver, and peripheral blood leukocytes.

It localises to the secreted. Its subcellular location is the extracellular space. The protein localises to the extracellular matrix. The sequence is that of SPARC-like protein 1 (SPARCL1) from Homo sapiens (Human).